The following is a 547-amino-acid chain: Sesterfisheric acid synthase (547 aa).

Residues 19-39 (IMGCSLGTGLLVSMIIYNYFF) traverse the membrane as a helical segment. Asn341 and Asn404 each carry an N-linked (GlcNAc...) asparagine glycan. Residue Cys490 participates in heme binding.

The protein belongs to the cytochrome P450 family. Heme is required as a cofactor.

The protein localises to the membrane. The enzyme catalyses sesterfisherol + 3 reduced [NADPH--hemoprotein reductase] + 3 O2 = sesterfisherate + 3 oxidized [NADPH--hemoprotein reductase] + 4 H2O + 4 H(+). It functions in the pathway secondary metabolite biosynthesis; terpenoid biosynthesis. Its function is as follows. Cytochrome P450 monooxygenase; part of the gene cluster that mediates the biosynthesis of sesterfisheric acid. The bifunctional terpene synthase NfSS converts DMAPP and IPP, and also GGPP, into sesterfisherol. The C-terminal prenyltransferase (PT) domain of NfSS catalyzes formation of GFPP, whereas the N-terminal terpene cyclase (TC) domain catalyzes the cyclization of GFPP to sesterfisherol. The cytochrome P450 monooxygenase NfP450 then catalyzes oxidative modifications of sesterfisherol into sesterfisheric acid. The polypeptide is Sesterfisheric acid synthase (Neosartorya fischeri (strain ATCC 1020 / DSM 3700 / CBS 544.65 / FGSC A1164 / JCM 1740 / NRRL 181 / WB 181) (Aspergillus fischerianus)).